The chain runs to 503 residues: Dentin matrix acidic phosphoprotein 1 (503 aa).

The first 16 residues, 1–16 (MKTVILLVFLWGLSCA), serve as a signal peptide directing secretion. Residues 23–35 (HNTESESSEERTG) are compositionally biased toward basic and acidic residues. The segment at 23–503 (HNTESESSEE…QDDNDCQDGY (481 aa)) is disordered. A compositionally biased stretch (polar residues) spans 54–63 (QASPEGQANS). The span at 98-119 (KEDDEDDSGDDTFGDEDNDLGP) shows a compositional bias: acidic residues. Low complexity predominate over residues 138 to 150 (DTTQSSEDSTSQE). Residues 158-175 (SDSKDHDSEDEADSRPEA) are compositionally biased toward basic and acidic residues. The span at 203–215 (SEFDDEGMQSDDP) shows a compositional bias: acidic residues. Basic and acidic residues-rich tracts occupy residues 233–243 (RSEESKGDHEP), 267–286 (HVSE…RETQ), and 293–303 (TASKEESRSES). Low complexity predominate over residues 332-348 (EPSQESSSESQEGVTSE). Residues 350–352 (RGD) carry the Cell attachment site motif. N-linked (GlcNAc...) asparagine glycosylation occurs at Asn356. Positions 362-373 (DQEDSESSEEDS) are enriched in acidic residues. N-linked (GlcNAc...) asparagine glycosylation occurs at Asn394. A compositionally biased stretch (polar residues) spans 407–418 (AQDGDSSSQEGL). Over residues 419 to 435 (QSQSASTESRSQESQSE) the composition is skewed to low complexity. Asn457 carries N-linked (GlcNAc...) asparagine glycosylation. Residues 467-492 (EDIRPKNMEADSRKLIVDAYHNKPIG) are compositionally biased toward basic and acidic residues. Residues 493 to 503 (DQDDNDCQDGY) are compositionally biased toward acidic residues.

In terms of assembly, interacts with importin alpha. Phosphorylated in the cytosol and extracellular matrix and unphosphorylated in the nucleus. Phosphorylation is necessary for nucleocytoplasmic transport and may be catalyzed by a nuclear isoform of CK2 and can be augmented by calcium. Phosphorylated (in vitro) by FAM20C in the extracellular medium at sites within the S-x-E/pS motif. In terms of tissue distribution, expressed in tooth particularly in odontoblast, ameloblast and cementoblast. Also expressed in bone particularly in osteoblast.

The protein localises to the nucleus. Its subcellular location is the cytoplasm. The protein resides in the secreted. It localises to the extracellular space. It is found in the extracellular matrix. May have a dual function during osteoblast differentiation. In the nucleus of undifferentiated osteoblasts, unphosphorylated form acts as a transcriptional component for activation of osteoblast-specific genes like osteocalcin. During the osteoblast to osteocyte transition phase it is phosphorylated and exported into the extracellular matrix, where it regulates nucleation of hydroxyapatite. This is Dentin matrix acidic phosphoprotein 1 from Mus musculus (Mouse).